Reading from the N-terminus, the 723-residue chain is Nicastrin (723 aa).

The N-terminal stretch at 1–16 is a signal peptide; the sequence is MKKWLVIVLIIAGIRC. The Extracellular segment spans residues 17–678; that stretch reads DGFSDQVFRT…ESVNLYLMED (662 aa). N-linked (GlcNAc...) asparagine glycans are attached at residues Asn40, Asn181, Asn271, Asn328, Asn409, and Asn627. A helical membrane pass occupies residues 679–699; the sequence is ASFEYTMILIAVISALLSIFA. Residues 700 to 723 lie on the Cytoplasmic side of the membrane; the sequence is VGRCSETTFIVDEGEPAAEGGEPL.

The protein belongs to the nicastrin family. Component of the gamma-secretase complex, a complex probably composed of the presenilin homodimer (sel-12, hop-1 or spe-4), nicastrin (aph-2), aph-1 and pen-2.

It localises to the membrane. In terms of biological role, essential subunit of the gamma-secretase complex, an endoprotease complex that catalyzes the intramembrane cleavage of integral membrane proteins such as Notch (glp-1 or lin-12). It may represents a stabilizing cofactor required for the assembly of the gamma-secretase complex. This is Nicastrin (aph-2) from Caenorhabditis elegans.